Here is a 100-residue protein sequence, read N- to C-terminus: Nucleoid-associated protein Cagg_3200 (100 aa).

This sequence belongs to the YbaB/EbfC family. Homodimer.

It localises to the cytoplasm. The protein localises to the nucleoid. Binds to DNA and alters its conformation. May be involved in regulation of gene expression, nucleoid organization and DNA protection. This chain is Nucleoid-associated protein Cagg_3200, found in Chloroflexus aggregans (strain MD-66 / DSM 9485).